A 166-amino-acid chain; its full sequence is Interleukin-3 (166 aa).

The signal sequence occupies residues 1 to 27 (MVLASSTTSILCMLLPLLMLFHQGLQI). 2 disulfide bridges follow: cysteine 43–cysteine 106 and cysteine 105–cysteine 166. 2 N-linked (GlcNAc...) asparagine glycosylation sites follow: asparagine 60 and asparagine 70. A disordered region spans residues 145 to 166 (SVSRPPQPTSSSDNFRPMTVEC).

Belongs to the IL-3 family. In terms of assembly, monomer. Activated T-cells, mast cells, natural killer cells.

Its subcellular location is the secreted. Functionally, cytokine secreted predominantly by activated T-lymphocytes as well as mast cells and osteoblastic cells that controls the production and differentiation of hematopoietic progenitor cells into lineage-restricted cells. Also stimulates mature basophils, eosinophils, and monocytes to become functionally activated. In addition, plays an important role in neural cell proliferation and survival. Participates as well in bone homeostasis and inhibits osteoclast differentiation by preventing NF-kappa-B nuclear translocation and activation. Mechanistically, exerts its biological effects through a receptor composed of IL3RA subunit and a signal transducing subunit IL3RB. Receptor stimulation results in the rapid activation of JAK2 kinase activity leading to STAT5-mediated transcriptional program. Alternatively, contributes to cell survival under oxidative stress in non-hematopoietic systems by activating pathways mediated by PI3K/AKT and ERK. In Rattus norvegicus (Rat), this protein is Interleukin-3 (Il3).